The primary structure comprises 135 residues: Ribosome-binding factor A (135 aa).

Belongs to the RbfA family. In terms of assembly, monomer. Binds 30S ribosomal subunits, but not 50S ribosomal subunits or 70S ribosomes.

It is found in the cytoplasm. Functionally, one of several proteins that assist in the late maturation steps of the functional core of the 30S ribosomal subunit. Associates with free 30S ribosomal subunits (but not with 30S subunits that are part of 70S ribosomes or polysomes). Required for efficient processing of 16S rRNA. May interact with the 5'-terminal helix region of 16S rRNA. The protein is Ribosome-binding factor A of Rhizobium meliloti (strain 1021) (Ensifer meliloti).